The chain runs to 200 residues: A-type ATP synthase subunit E (200 aa).

Belongs to the V-ATPase E subunit family. In terms of assembly, has multiple subunits with at least A(3), B(3), C, D, E, F, H, I and proteolipid K(x).

The protein resides in the cell membrane. Its function is as follows. Component of the A-type ATP synthase that produces ATP from ADP in the presence of a proton gradient across the membrane. The chain is A-type ATP synthase subunit E from Methanopyrus kandleri (strain AV19 / DSM 6324 / JCM 9639 / NBRC 100938).